Reading from the N-terminus, the 171-residue chain is MEHSTFLSGLVLATLLSQVSPFKIPIEELEDRVFVNCNTSITWVEGTVGTLLSDITRLDLGKRILDPRGIYRCNGTDIYKDKESTVQVHYRMCQSCVELDPATVAGIIVTDVIATLLLALGVFCFAGHETGRLSGAADTQALLRNDQVYQPLRDRDDAQYSHLGGNWARNK.

The signal sequence occupies residues 1–21 (MEHSTFLSGLVLATLLSQVSP). Over 22–105 (FKIPIEELED…CVELDPATVA (84 aa)) the chain is Extracellular. Cys37 and Cys73 are disulfide-bonded. N-linked (GlcNAc...) asparagine glycans are attached at residues Asn38 and Asn74. The chain crosses the membrane as a helical span at residues 106–126 (GIIVTDVIATLLLALGVFCFA). Topologically, residues 127-171 (GHETGRLSGAADTQALLRNDQVYQPLRDRDDAQYSHLGGNWARNK) are cytoplasmic. In terms of domain architecture, ITAM spans 138–166 (DTQALLRNDQVYQPLRDRDDAQYSHLGGN). Phosphotyrosine occurs at positions 149 and 160.

The TCR-CD3 complex is composed of a CD3D/CD3E and a CD3G/CD3E heterodimers that preferentially associate with TCRalpha and TCRbeta, respectively, to form TCRalpha/CD3E/CD3G and TCRbeta/CD3G/CD3E trimers. In turn, the hexamer interacts with CD3Z homodimer to form the TCR-CD3 complex. Alternatively, TCRalpha and TCRbeta can be replaced by TCRgamma and TCRdelta. Interacts with coreceptors CD4 and CD8. Post-translationally, phosphorylated on Tyr residues after T-cell receptor triggering by LCK in association with CD4/CD8. In terms of tissue distribution, CD3D is mostly present on T-lymphocytes with its TCR-CD3 partners. Present also in fetal NK-cells.

The protein resides in the cell membrane. Part of the TCR-CD3 complex present on T-lymphocyte cell surface that plays an essential role in adaptive immune response. When antigen presenting cells (APCs) activate T-cell receptor (TCR), TCR-mediated signals are transmitted across the cell membrane by the CD3 chains CD3D, CD3E, CD3G and CD3Z. All CD3 chains contain immunoreceptor tyrosine-based activation motifs (ITAMs) in their cytoplasmic domain. Upon TCR engagement, these motifs become phosphorylated by Src family protein tyrosine kinases LCK and FYN, resulting in the activation of downstream signaling pathways. In addition of this role of signal transduction in T-cell activation, CD3D plays an essential role in thymocyte differentiation. Indeed, participates in correct intracellular TCR-CD3 complex assembly and surface expression. In absence of a functional TCR-CD3 complex, thymocytes are unable to differentiate properly. Interacts with CD4 and CD8 and thus serves to establish a functional link between the TCR and coreceptors CD4 and CD8, which is needed for activation and positive selection of CD4 or CD8 T-cells. In Homo sapiens (Human), this protein is T-cell surface glycoprotein CD3 delta chain (CD3D).